We begin with the raw amino-acid sequence, 1205 residues long: Nitric oxide synthase 3 (1205 aa).

Disordered regions lie at residues methionine 1–glycine 20 and cysteine 26–valine 73. Residues serine 33–proline 47 show a composition bias toward pro residues. Zn(2+) contacts are provided by cysteine 96 and cysteine 101. Residues arginine 100–lysine 489 form an interaction with NOSIP region. Serine 104 is a (6R)-L-erythro-5,6,7,8-tetrahydrobiopterin binding site. Serine 116 bears the Phosphoserine mark. Cysteine 186 serves as a coordination point for heme b. Positions 250, 359, 360, and 364 each coordinate L-arginine. Arginine 368 is a binding site for (6R)-L-erythro-5,6,7,8-tetrahydrobiopterin. Residue asparagine 369 coordinates L-arginine. (6R)-L-erythro-5,6,7,8-tetrahydrobiopterin is bound by residues alanine 449, tryptophan 450, and phenylalanine 463. Position 478 (tyrosine 478) interacts with heme b. Phosphothreonine is present on threonine 498. Residues serine 529, glutamate 530, threonine 531, arginine 533, serine 575, and threonine 576 each coordinate FMN. 3 positions are modified to phosphoserine: serine 618, serine 636, and serine 641. FMN is bound by residues serine 657, cysteine 664, glutamate 690, and glutamine 694. NADP(+) is bound at residue arginine 781. Positions leucine 796–arginine 850 are disordered. An FAD-binding site is contributed by histidine 803. Residues proline 833–serine 844 show a composition bias toward pro residues. Arginine 939, tyrosine 941, serine 942, threonine 957, and alanine 959 together coordinate FAD. NADP(+) is bound by residues threonine 1018, arginine 1051, serine 1080, arginine 1081, lysine 1087, tyrosine 1089, and glutamine 1091. Threonine 1177 is modified (phosphothreonine). Phosphoserine is present on residues serine 1179 and serine 1181.

The protein belongs to the NOS family. Homodimer. Interacts with NOSIP and NOSTRIN. Interacts with HSP90AB1. Forms a complex with ASL, ASS1 and SLC7A1; the complex regulates cell-autonomous L-arginine synthesis and citrulline recycling while channeling extracellular L-arginine to nitric oxide synthesis pathway. Heme b serves as cofactor. Requires FAD as cofactor. It depends on FMN as a cofactor. The cofactor is (6R)-L-erythro-5,6,7,8-tetrahydrobiopterin.

The protein localises to the membrane. Its subcellular location is the caveola. The protein resides in the cytoplasm. It localises to the cytoskeleton. It is found in the golgi apparatus. The protein localises to the cell membrane. It carries out the reaction 2 L-arginine + 3 NADPH + 4 O2 + H(+) = 2 L-citrulline + 2 nitric oxide + 3 NADP(+) + 4 H2O. With respect to regulation, stimulated by calcium/calmodulin. Inhibited by NOSIP and NOSTRIN. Produces nitric oxide (NO) which is implicated in vascular smooth muscle relaxation through a cGMP-mediated signal transduction pathway. NO mediates vascular endothelial growth factor (VEGF)-induced angiogenesis in coronary vessels and promotes blood clotting through the activation of platelets. The sequence is that of Nitric oxide synthase 3 (NOS3) from Ovis aries (Sheep).